The sequence spans 528 residues: DNA primase large subunit (528 aa).

Residues 210 to 239 form an H-T-H-like motif region; sequence NEEHQRKQYFQQEKFIKLPFENVIELVGNR. [4Fe-4S] cluster-binding residues include Cys336, Cys417, Cys434, and Cys474.

Belongs to the eukaryotic-type primase large subunit family. In terms of assembly, DNA polymerase alpha:primase is a four subunit enzyme complex, which is assembled throughout the cell cycle, and consists of the two DNA polymerase subunits A POL1 and B POL12, and the DNA primase large PRI2 and small PRI1 subunits. Interacts with MCM10. Requires [4Fe-4S] cluster as cofactor.

Its function is as follows. DNA primase is the polymerase that synthesizes small RNA primers for the Okazaki fragments made during discontinuous DNA replication. In a complex with DNA polymerase alpha (DNA polymerase alpha:primase) constitutes a replicative polymerase. Both primase components participate in formation of the active center, but the ATP-binding site is exclusively located on p48. This is DNA primase large subunit (PRI2) from Saccharomyces cerevisiae (strain ATCC 204508 / S288c) (Baker's yeast).